The chain runs to 73 residues: Large ribosomal subunit protein bL28 (73 aa).

The protein belongs to the bacterial ribosomal protein bL28 family.

The protein is Large ribosomal subunit protein bL28 of Fervidobacterium nodosum (strain ATCC 35602 / DSM 5306 / Rt17-B1).